The primary structure comprises 144 residues: Large ribosomal subunit protein uL15 (144 aa).

The disordered stretch occupies residues G20 to G49. Residues R21–G31 are compositionally biased toward gly residues.

The protein belongs to the universal ribosomal protein uL15 family. In terms of assembly, part of the 50S ribosomal subunit.

Its function is as follows. Binds to the 23S rRNA. This is Large ribosomal subunit protein uL15 from Neisseria meningitidis serogroup C (strain 053442).